A 96-amino-acid chain; its full sequence is Aspartyl/glutamyl-tRNA(Asn/Gln) amidotransferase subunit C (96 aa).

The protein belongs to the GatC family. Heterotrimer of A, B and C subunits.

The enzyme catalyses L-glutamyl-tRNA(Gln) + L-glutamine + ATP + H2O = L-glutaminyl-tRNA(Gln) + L-glutamate + ADP + phosphate + H(+). The catalysed reaction is L-aspartyl-tRNA(Asn) + L-glutamine + ATP + H2O = L-asparaginyl-tRNA(Asn) + L-glutamate + ADP + phosphate + 2 H(+). Allows the formation of correctly charged Asn-tRNA(Asn) or Gln-tRNA(Gln) through the transamidation of misacylated Asp-tRNA(Asn) or Glu-tRNA(Gln) in organisms which lack either or both of asparaginyl-tRNA or glutaminyl-tRNA synthetases. The reaction takes place in the presence of glutamine and ATP through an activated phospho-Asp-tRNA(Asn) or phospho-Glu-tRNA(Gln). The sequence is that of Aspartyl/glutamyl-tRNA(Asn/Gln) amidotransferase subunit C from Herpetosiphon aurantiacus (strain ATCC 23779 / DSM 785 / 114-95).